A 414-amino-acid chain; its full sequence is Serine hydroxymethyltransferase (414 aa).

Residues Leu121 and Gly125–Leu127 each bind (6S)-5,6,7,8-tetrahydrofolate. At Lys229 the chain carries N6-(pyridoxal phosphate)lysine.

It belongs to the SHMT family. Homodimer. The cofactor is pyridoxal 5'-phosphate.

Its subcellular location is the cytoplasm. The catalysed reaction is (6R)-5,10-methylene-5,6,7,8-tetrahydrofolate + glycine + H2O = (6S)-5,6,7,8-tetrahydrofolate + L-serine. It functions in the pathway one-carbon metabolism; tetrahydrofolate interconversion. The protein operates within amino-acid biosynthesis; glycine biosynthesis; glycine from L-serine: step 1/1. Functionally, catalyzes the reversible interconversion of serine and glycine with tetrahydrofolate (THF) serving as the one-carbon carrier. This reaction serves as the major source of one-carbon groups required for the biosynthesis of purines, thymidylate, methionine, and other important biomolecules. Also exhibits THF-independent aldolase activity toward beta-hydroxyamino acids, producing glycine and aldehydes, via a retro-aldol mechanism. The protein is Serine hydroxymethyltransferase of Variovorax paradoxus (strain S110).